A 368-amino-acid chain; its full sequence is Protein 5 (368 aa).

The protein is Protein 5 of Lettuce big-vein associated virus (isolate Japan/Kagawa) (LBVaV).